The sequence spans 273 residues: MGKQKIIDARKAYYEGDIEKSKEIHSHYHNLDKHAEHHSLDKDHLKTIIFGSLDGIITIFAIVSGCVGANITPAQVIIIGVGNLFANAISMGFSEYTSSTAQIDFMLAERQREEWEIENCPTEEKQEMIDIYINKYKFDSKDAKNLVEITFRNKHFFLEHMMSEELGLILTNEDKSEAFKKGILMFLSFCFFGMIPLFSYVLYNLFFSAENYTSSFAVVFISTLITLFILGLFKSQFTTQKPIVCALSMVLNGSIAGMLPFLFGVLLKTNSGD.

Over 1-47 the chain is Cytoplasmic; that stretch reads MGKQKIIDARKAYYEGDIEKSKEIHSHYHNLDKHAEHHSLDKDHLKT. A helical transmembrane segment spans residues 48 to 68; that stretch reads IIFGSLDGIITIFAIVSGCVG. The Vacuolar segment spans residues 69–72; it reads ANIT. Residues 73-93 traverse the membrane as a helical segment; that stretch reads PAQVIIIGVGNLFANAISMGF. The Cytoplasmic segment spans residues 94–181; sequence SEYTSSTAQI…NEDKSEAFKK (88 aa). Glu113, Glu116, Glu124, Glu127, Met161, and Glu165 together coordinate Fe cation. Residues 182–202 form a helical membrane-spanning segment; it reads GILMFLSFCFFGMIPLFSYVL. The Vacuolar portion of the chain corresponds to 203 to 212; it reads YNLFFSAENY. A helical transmembrane segment spans residues 213–233; sequence TSSFAVVFISTLITLFILGLF. Residues 234-246 lie on the Cytoplasmic side of the membrane; it reads KSQFTTQKPIVCA. A helical transmembrane segment spans residues 247–267; the sequence is LSMVLNGSIAGMLPFLFGVLL. Over 268-273 the chain is Vacuolar; it reads KTNSGD.

This sequence belongs to the CCC1 family. As to quaternary structure, monomer.

It is found in the vacuole membrane. The protein localises to the endoplasmic reticulum membrane. The catalysed reaction is Fe(2+)(in) = Fe(2+)(out). Vacuolar iron transporter involved in the transfer of iron ions from the cytosol to the vacuole for intracellular iron storage. Involved in detoxification of excess iron. The transport mechanism is not well defined and the role of protons is not clear. This Plasmodium berghei (strain Anka) protein is Vacuolar iron transporter.